Reading from the N-terminus, the 379-residue chain is Flagellar P-ring protein (379 aa).

Residues 1 to 32 (MTAPAGFLPRVGRLIAVALTAVFLLAPTGAEA) form the signal peptide.

Belongs to the FlgI family. The basal body constitutes a major portion of the flagellar organelle and consists of four rings (L,P,S, and M) mounted on a central rod.

It is found in the periplasm. Its subcellular location is the bacterial flagellum basal body. Functionally, assembles around the rod to form the L-ring and probably protects the motor/basal body from shearing forces during rotation. The protein is Flagellar P-ring protein of Rhodospirillum rubrum (strain ATCC 11170 / ATH 1.1.1 / DSM 467 / LMG 4362 / NCIMB 8255 / S1).